Here is a 597-residue protein sequence, read N- to C-terminus: Formate--tetrahydrofolate ligase (597 aa).

Thr84–Ser91 is an ATP binding site.

This sequence belongs to the formate--tetrahydrofolate ligase family.

It carries out the reaction (6S)-5,6,7,8-tetrahydrofolate + formate + ATP = (6R)-10-formyltetrahydrofolate + ADP + phosphate. The protein operates within one-carbon metabolism; tetrahydrofolate interconversion. The sequence is that of Formate--tetrahydrofolate ligase from Dehalococcoides mccartyi (strain ATCC BAA-2266 / KCTC 15142 / 195) (Dehalococcoides ethenogenes (strain 195)).